Here is a 315-residue protein sequence, read N- to C-terminus: MAAPEVLESDLPNAVALLKNLQEQVMAVTAQVQTLTKKVQAKAYPTEKGLSLLEVKDQLLLMYLMDLSHLILDKASGGSLQGHPAVLRLVEIRTVLEKLRPLDQKLKYQIDKLVKTAVTGSLSENDPLRFKPHPSNMMSKLSSEDEEEDEAEEGQSGASGKKSGKGTAKKYVPPRLVPVHYDETEAEREKKRLERAKRRALSSSVIRELKEQYSDAPEEIRDARHPHVTRQSQEDQHRINYEESMMVRLSVSKREKGRRKRANVMSSQLHSLTHFSDISALTGGTPHLDEDQNPTKKRKKIPKKGRKKKGFRRRR.

Ala2 is subject to N-acetylalanine. A coiled-coil region spans residues 5–42 (EVLESDLPNAVALLKNLQEQVMAVTAQVQTLTKKVQAK). Residues 41 to 174 (AKAYPTEKGL…KGTAKKYVPP (134 aa)) are necessary for interaction with EIF4E. Phosphoserine is present on residues Ser121, Ser142, and Ser143. Positions 123–174 (SENDPLRFKPHPSNMMSKLSSEDEEEDEAEEGQSGASGKKSGKGTAKKYVPP) are disordered. The span at 144-153 (EDEEEDEAEE) shows a compositional bias: acidic residues. Positions 181 to 205 (YDETEAEREKKRLERAKRRALSSSV) form a coiled coil. Residues Ser204 and Ser214 each carry the phosphoserine modification. The tract at residues 252-315 (SKREKGRRKR…RKKKGFRRRR (64 aa)) is disordered. A compositionally biased stretch (polar residues) spans 264–276 (VMSSQLHSLTHFS). Over residues 295 to 315 (TKKRKKIPKKGRKKKGFRRRR) the composition is skewed to basic residues.

Belongs to the SAS10 family. As to quaternary structure, part of the small subunit (SSU) processome, composed of more than 70 proteins and the RNA chaperone small nucleolar RNA (snoRNA) U3. Interacts with CPEB1 and EIF4E.

The protein resides in the nucleus. The protein localises to the nucleolus. It localises to the chromosome. It is found in the centromere. Its subcellular location is the cytoplasm. The protein resides in the cell projection. The protein localises to the axon. It localises to the dendrite. It is found in the filopodium. Part of the small subunit (SSU) processome, first precursor of the small eukaryotic ribosomal subunit. During the assembly of the SSU processome in the nucleolus, many ribosome biogenesis factors, an RNA chaperone and ribosomal proteins associate with the nascent pre-rRNA and work in concert to generate RNA folding, modifications, rearrangements and cleavage as well as targeted degradation of pre-ribosomal RNA by the RNA exosome. Its dissociation from the complex determines the transition from state pre-A1 to state pre-A1*. Inhibits mRNA translation in a cytoplasmic polyadenylation element (CPE)-dependent manner. The protein is Neuroguidin (NGDN) of Bos taurus (Bovine).